A 317-amino-acid chain; its full sequence is 4-hydroxy-3-methylbut-2-enyl diphosphate reductase (317 aa).

Residue Cys12 participates in [4Fe-4S] cluster binding. Residues His41 and His74 each coordinate (2E)-4-hydroxy-3-methylbut-2-enyl diphosphate. Residues His41 and His74 each contribute to the dimethylallyl diphosphate site. Positions 41 and 74 each coordinate isopentenyl diphosphate. Cys96 provides a ligand contact to [4Fe-4S] cluster. His124 is a (2E)-4-hydroxy-3-methylbut-2-enyl diphosphate binding site. His124 serves as a coordination point for dimethylallyl diphosphate. His124 provides a ligand contact to isopentenyl diphosphate. Catalysis depends on Glu126, which acts as the Proton donor. Thr169 is a binding site for (2E)-4-hydroxy-3-methylbut-2-enyl diphosphate. A [4Fe-4S] cluster-binding site is contributed by Cys199. Ser227, Ser228, Asn229, and Ser271 together coordinate (2E)-4-hydroxy-3-methylbut-2-enyl diphosphate. Residues Ser227, Ser228, Asn229, and Ser271 each coordinate dimethylallyl diphosphate. The isopentenyl diphosphate site is built by Ser227, Ser228, Asn229, and Ser271.

The protein belongs to the IspH family. The cofactor is [4Fe-4S] cluster.

It carries out the reaction isopentenyl diphosphate + 2 oxidized [2Fe-2S]-[ferredoxin] + H2O = (2E)-4-hydroxy-3-methylbut-2-enyl diphosphate + 2 reduced [2Fe-2S]-[ferredoxin] + 2 H(+). The enzyme catalyses dimethylallyl diphosphate + 2 oxidized [2Fe-2S]-[ferredoxin] + H2O = (2E)-4-hydroxy-3-methylbut-2-enyl diphosphate + 2 reduced [2Fe-2S]-[ferredoxin] + 2 H(+). The protein operates within isoprenoid biosynthesis; dimethylallyl diphosphate biosynthesis; dimethylallyl diphosphate from (2E)-4-hydroxy-3-methylbutenyl diphosphate: step 1/1. Its pathway is isoprenoid biosynthesis; isopentenyl diphosphate biosynthesis via DXP pathway; isopentenyl diphosphate from 1-deoxy-D-xylulose 5-phosphate: step 6/6. Functionally, catalyzes the conversion of 1-hydroxy-2-methyl-2-(E)-butenyl 4-diphosphate (HMBPP) into a mixture of isopentenyl diphosphate (IPP) and dimethylallyl diphosphate (DMAPP). Acts in the terminal step of the DOXP/MEP pathway for isoprenoid precursor biosynthesis. The sequence is that of 4-hydroxy-3-methylbut-2-enyl diphosphate reductase from Vibrio parahaemolyticus serotype O3:K6 (strain RIMD 2210633).